The primary structure comprises 168 residues: Ribosome maturation factor RimM (168 aa).

One can recognise a PRC barrel domain in the interval 93–168; it reads EDEFYQSDLV…IVLNIPEFID (76 aa).

It belongs to the RimM family. In terms of assembly, binds ribosomal protein uS19.

It is found in the cytoplasm. Its function is as follows. An accessory protein needed during the final step in the assembly of 30S ribosomal subunit, possibly for assembly of the head region. Essential for efficient processing of 16S rRNA. May be needed both before and after RbfA during the maturation of 16S rRNA. It has affinity for free ribosomal 30S subunits but not for 70S ribosomes. This chain is Ribosome maturation factor RimM, found in Wolbachia pipientis wMel.